Here is a 106-residue protein sequence, read N- to C-terminus: Iron-sulfur cluster assembly protein CyaY (106 aa).

The protein belongs to the frataxin family.

Functionally, involved in iron-sulfur (Fe-S) cluster assembly. May act as a regulator of Fe-S biogenesis. The polypeptide is Iron-sulfur cluster assembly protein CyaY (Salmonella newport (strain SL254)).